Here is a 217-residue protein sequence, read N- to C-terminus: Probable GTP-binding protein EngB (217 aa).

In terms of domain architecture, EngB-type G spans S24–P207. Residues G32–S39, G59–H63, D81–G84, T148–D151, and L185–A188 contribute to the GTP site. Positions 39 and 61 each coordinate Mg(2+).

This sequence belongs to the TRAFAC class TrmE-Era-EngA-EngB-Septin-like GTPase superfamily. EngB GTPase family. The cofactor is Mg(2+).

Necessary for normal cell division and for the maintenance of normal septation. The sequence is that of Probable GTP-binding protein EngB from Paraburkholderia xenovorans (strain LB400).